The following is a 415-amino-acid chain: Tumor necrosis factor receptor superfamily member 3 (415 aa).

An N-terminal signal peptide occupies residues 1–30; it reads MRLPRASSPCGLAWGPLLLGLSGLLVASQP. Residues 31–223 are Extracellular-facing; sequence QLVPPYRIEN…NPPEPGAMLL (193 aa). Asparagine 40 carries N-linked (GlcNAc...) asparagine glycosylation. TNFR-Cys repeat units follow at residues 42 to 81, 82 to 124, 125 to 170, and 171 to 213; these read TCWDQDKEYYEPMHDVCCSRCPPGEFVFAVCSRSQDTVCK, TCPH…KAEC, RCQP…VNCV, and PCKP…TICK. Disulfide bonds link cysteine 43–cysteine 58, cysteine 59–cysteine 72, cysteine 62–cysteine 80, cysteine 83–cysteine 98, cysteine 101–cysteine 116, cysteine 104–cysteine 124, cysteine 126–cysteine 132, cysteine 139–cysteine 150, cysteine 142–cysteine 169, and cysteine 172–cysteine 187. Residue asparagine 179 is glycosylated (N-linked (GlcNAc...) asparagine). Residues 224–244 traverse the membrane as a helical segment; the sequence is LAILLSLVLFLLFTTVLACAW. Residues 245-415 are Cytoplasmic-facing; that stretch reads MRHPSLCRKL…ETETLGCQDL (171 aa). The segment at 261–304 is disordered; it reads HPEGEESPPCPAPRADPHFPDLAEPLLPMSGDLSPSPAGPPTAP. Position 315 is a phosphoserine (serine 315). A disordered region spans residues 361-399; it reads LGGTRGPGDPPAPPEPPYPTPEEGAPGPSELSTPYQEDG. Over residues 368 to 380 the composition is skewed to pro residues; it reads GDPPAPPEPPYPT.

As to quaternary structure, self-associates; dimerization and trimerization are promoted by lymphotoxin (LTA(3)). Associates with TRAF3. Associates with TRAF4. Associates with TRAF5.

Its subcellular location is the membrane. Functionally, receptor for the heterotrimeric lymphotoxin containing LTA and LTB, and for TNFS14/LIGHT. Activates NF-kappa-B signaling upon stimulation with lymphotoxin. Promotes apoptosis via TRAF3 and TRAF5. May play a role in the development of lymphoid organs. In terms of biological role, (Microbial infection) Plays a role in host defense against Zika virus infection. The polypeptide is Tumor necrosis factor receptor superfamily member 3 (Ltbr) (Mus musculus (Mouse)).